A 175-amino-acid polypeptide reads, in one-letter code: Nucleoside triphosphate/diphosphate phosphatase (175 aa).

Arginine 23 serves as the catalytic Proton donor. 6 residues coordinate Mg(2+): asparagine 87, aspartate 103, aspartate 105, aspartate 107, aspartate 120, and glutamate 123.

The protein belongs to the Ntdp family. It depends on Mg(2+) as a cofactor.

The enzyme catalyses a ribonucleoside 5'-triphosphate + H2O = a ribonucleoside 5'-diphosphate + phosphate + H(+). It catalyses the reaction a ribonucleoside 5'-diphosphate + H2O = a ribonucleoside 5'-phosphate + phosphate + H(+). Functionally, has nucleoside phosphatase activity towards nucleoside triphosphates and nucleoside diphosphates. This Listeria innocua serovar 6a (strain ATCC BAA-680 / CLIP 11262) protein is Nucleoside triphosphate/diphosphate phosphatase.